The primary structure comprises 318 residues: Phosphate acetyltransferase (318 aa).

The protein belongs to the phosphate acetyltransferase and butyryltransferase family.

The protein resides in the cytoplasm. It catalyses the reaction acetyl-CoA + phosphate = acetyl phosphate + CoA. The protein operates within metabolic intermediate biosynthesis; acetyl-CoA biosynthesis; acetyl-CoA from acetate: step 2/2. The chain is Phosphate acetyltransferase (pta) from Paracoccus denitrificans.